The following is a 591-amino-acid chain: V-type ATP synthase alpha chain (591 aa).

232-239 (GPFGAGKT) contributes to the ATP binding site.

It belongs to the ATPase alpha/beta chains family.

It catalyses the reaction ATP + H2O + 4 H(+)(in) = ADP + phosphate + 5 H(+)(out). Its function is as follows. Produces ATP from ADP in the presence of a proton gradient across the membrane. The V-type alpha chain is a catalytic subunit. The chain is V-type ATP synthase alpha chain from Nitrosococcus oceani (strain ATCC 19707 / BCRC 17464 / JCM 30415 / NCIMB 11848 / C-107).